An 871-amino-acid polypeptide reads, in one-letter code: Metabotropic glutamate receptor 6 (871 aa).

Residues 1-23 (MGRLRVLLLWLAWWLSQAGIAHG) form the signal peptide. At 24–579 (AGSVRLAGGL…VVRLTWSSPW (556 aa)) the chain is on the extracellular side. C51 and C93 form a disulfide bridge. L-glutamate-binding positions include S148, 169-171 (AST), and Y219. 7 disulfides stabilise this stretch: C238–C530, C361–C377, C417–C424, C512–C531, C516–C534, C537–C549, and C552–C565. A glycan (N-linked (GlcNAc...) asparagine) is linked at N290. D301 lines the L-glutamate pocket. Position 394 (K394) interacts with L-glutamate. 2 N-linked (GlcNAc...) asparagine glycosylation sites follow: N445 and N473. N561 carries N-linked (GlcNAc...) asparagine glycosylation. A helical transmembrane segment spans residues 580 to 602 (AALPLLLAVLGIMATTTIIATFM). Over 603-616 (RHNDTPIVRASGRE) the chain is Cytoplasmic. The chain crosses the membrane as a helical span at residues 617–637 (LSYVLLTGIFLIYAITFLMVA). The Extracellular portion of the chain corresponds to 638–648 (EPCAAVCASRR). The chain crosses the membrane as a helical span at residues 649–667 (LLLGLGTTLSYSALLTKTN). Over 668–691 (RIYRIFEQGKRSVTPPPFISPTSQ) the chain is Cytoplasmic. The chain crosses the membrane as a helical span at residues 692 to 712 (LVITFGLTSLQVVGVIAWLGA). Residues 713–742 (QPPHSVIDYEEQRTVDPEQARGVLKCDMSD) lie on the Extracellular side of the membrane. A helical membrane pass occupies residues 743–764 (LSLIGCLGYSLLLMVTCTVYAI). Over 765-777 (KARGVPETFNEAK) the chain is Cytoplasmic. The helical transmembrane segment at 778 to 800 (PIGFTMYTTCIIWLAFVPIFFGT) threads the bilayer. Topologically, residues 801 to 813 (AQSAEKIYIQTTT) are extracellular. The helical transmembrane segment at 814-839 (LTVSLSLSASVSLGMLYVPKTYVILF) threads the bilayer. Residues 840–871 (HPEQNVQKRKRSLKKTSTMAAPPKSENSEDAK) lie on the Cytoplasmic side of the membrane. The interval 848-871 (RKRSLKKTSTMAAPPKSENSEDAK) is disordered.

Belongs to the G-protein coupled receptor 3 family. Homodimer. Interacts with GPR179. Interacts with photoreceptor synaptic protein LRIT1 (via its N-terminal extracellular domain). As to expression, detected in the outer plexiform layer in retina (at protein level).

It is found in the cell membrane. The protein localises to the endoplasmic reticulum membrane. The protein resides in the golgi apparatus membrane. Its subcellular location is the cell projection. It localises to the dendrite. Its function is as follows. G-protein coupled receptor for glutamate. Ligand binding causes a conformation change that triggers signaling via guanine nucleotide-binding proteins (G proteins) and modulates the activity of down-stream effectors, such as adenylate cyclase. Signaling inhibits adenylate cyclase activity. Signaling stimulates TRPM1 channel activity and Ca(2+) uptake. Required for normal vision. The sequence is that of Metabotropic glutamate receptor 6 (Grm6) from Mus musculus (Mouse).